The primary structure comprises 166 residues: 3-hydroxyacyl-[acyl-carrier-protein] dehydratase, mitochondrial (166 aa).

The N-terminal 17 residues, 1–17, are a transit peptide targeting the mitochondrion; sequence MLAKTVFPRGLLVLRSF. Positions 34 to 125 constitute a MaoC-like domain; the sequence is ETRVFSSEDI…VQAIALRETK (92 aa).

As to quaternary structure, homodimer. In terms of tissue distribution, expressed in leaves, roots, siliques and flowers.

The protein localises to the mitochondrion. The enzyme catalyses a (3R)-hydroxyacyl-[ACP] = a (2E)-enoyl-[ACP] + H2O. It catalyses the reaction (3R)-hydroxyhexadecanoyl-[ACP] = (2E)-hexadecenoyl-[ACP] + H2O. The catalysed reaction is (3R)-hydroxydecanoyl-[ACP] = (2E)-decenoyl-[ACP] + H2O. Its pathway is lipid metabolism; fatty acid biosynthesis. In terms of biological role, 3-hydroxyl-[acyl-carrier-protein] (3-hydroxyl-ACP) dehydratase required for mitochondrial fatty acid synthesis (mtFAS). MtFAS are essential for photorespiration and plant development, probably by influencing mitochondrial membrane lipid composition and other lipid metabolic pathways. The chain is 3-hydroxyacyl-[acyl-carrier-protein] dehydratase, mitochondrial from Arabidopsis thaliana (Mouse-ear cress).